The following is a 263-amino-acid chain: uncharacterized protein (263 aa).

31–38 contributes to the ATP binding site; it reads GPTGSGKT.

This sequence belongs to the CbbQ/NirQ/NorQ/GpvN family.

This is an uncharacterized protein from Staphylococcus epidermidis (strain ATCC 12228 / FDA PCI 1200).